Consider the following 192-residue polypeptide: Xanthine phosphoribosyltransferase (192 aa).

Residues Leu20 and Asn27 each coordinate xanthine. 128-132 (ADGEA) is a 5-phospho-alpha-D-ribose 1-diphosphate binding site. Lys156 lines the xanthine pocket.

It belongs to the purine/pyrimidine phosphoribosyltransferase family. Xpt subfamily. In terms of assembly, homodimer.

Its subcellular location is the cytoplasm. The enzyme catalyses XMP + diphosphate = xanthine + 5-phospho-alpha-D-ribose 1-diphosphate. It participates in purine metabolism; XMP biosynthesis via salvage pathway; XMP from xanthine: step 1/1. Converts the preformed base xanthine, a product of nucleic acid breakdown, to xanthosine 5'-monophosphate (XMP), so it can be reused for RNA or DNA synthesis. The polypeptide is Xanthine phosphoribosyltransferase (Agathobacter rectalis (strain ATCC 33656 / DSM 3377 / JCM 17463 / KCTC 5835 / VPI 0990) (Eubacterium rectale)).